Consider the following 147-residue polypeptide: Fibromodulin (147 aa).

LRR repeat units follow at residues L1–R15, S16–G37, N40–L61, S63–A84, L85–G105, and K108–T128. Residue N5 is glycosylated (N-linked (GlcNAc...) (keratan sulfate) asparagine). A glycan (N-linked (GlcNAc...) (keratan sulfate) asparagine) is linked at N40. N130 carries N-linked (GlcNAc...) (keratan sulfate) asparagine glycosylation. Residues S133–I147 form an LRR 7 repeat.

It belongs to the small leucine-rich proteoglycan (SLRP) family. SLRP class II subfamily. Binds to type I and type II collagen. In terms of processing, binds keratan sulfate chains.

The protein localises to the secreted. The protein resides in the extracellular space. It is found in the extracellular matrix. Affects the rate of fibrils formation. May have a primary role in collagen fibrillogenesis. The polypeptide is Fibromodulin (FMOD) (Sus scrofa (Pig)).